Consider the following 414-residue polypeptide: CCA-adding enzyme (414 aa).

2 residues coordinate ATP: Gly8 and Arg11. CTP-binding residues include Gly8 and Arg11. The Mg(2+) site is built by Asp21 and Asp23. The ATP site is built by Arg92, Arg138, and Arg141. The CTP site is built by Arg92, Arg138, and Arg141.

The protein belongs to the tRNA nucleotidyltransferase/poly(A) polymerase family. Bacterial CCA-adding enzyme type 2 subfamily. Requires Mg(2+) as cofactor.

It catalyses the reaction a tRNA precursor + 2 CTP + ATP = a tRNA with a 3' CCA end + 3 diphosphate. The catalysed reaction is a tRNA with a 3' CCA end + 2 CTP + ATP = a tRNA with a 3' CCACCA end + 3 diphosphate. Catalyzes the addition and repair of the essential 3'-terminal CCA sequence in tRNAs without using a nucleic acid template. Adds these three nucleotides in the order of C, C, and A to the tRNA nucleotide-73, using CTP and ATP as substrates and producing inorganic pyrophosphate. tRNA 3'-terminal CCA addition is required both for tRNA processing and repair. Also involved in tRNA surveillance by mediating tandem CCA addition to generate a CCACCA at the 3' terminus of unstable tRNAs. While stable tRNAs receive only 3'-terminal CCA, unstable tRNAs are marked with CCACCA and rapidly degraded. This Buchnera aphidicola subsp. Cinara cedri (strain Cc) protein is CCA-adding enzyme.